Consider the following 201-residue polypeptide: 3-isopropylmalate dehydratase small subunit (201 aa).

It belongs to the LeuD family. LeuD type 1 subfamily. Heterodimer of LeuC and LeuD.

It catalyses the reaction (2R,3S)-3-isopropylmalate = (2S)-2-isopropylmalate. It participates in amino-acid biosynthesis; L-leucine biosynthesis; L-leucine from 3-methyl-2-oxobutanoate: step 2/4. Its function is as follows. Catalyzes the isomerization between 2-isopropylmalate and 3-isopropylmalate, via the formation of 2-isopropylmaleate. In Micrococcus luteus (strain ATCC 4698 / DSM 20030 / JCM 1464 / CCM 169 / CCUG 5858 / IAM 1056 / NBRC 3333 / NCIMB 9278 / NCTC 2665 / VKM Ac-2230) (Micrococcus lysodeikticus), this protein is 3-isopropylmalate dehydratase small subunit.